The primary structure comprises 113 residues: Large ribosomal subunit protein uL22 (113 aa).

Belongs to the universal ribosomal protein uL22 family. Part of the 50S ribosomal subunit.

This protein binds specifically to 23S rRNA; its binding is stimulated by other ribosomal proteins, e.g. L4, L17, and L20. It is important during the early stages of 50S assembly. It makes multiple contacts with different domains of the 23S rRNA in the assembled 50S subunit and ribosome. In terms of biological role, the globular domain of the protein is located near the polypeptide exit tunnel on the outside of the subunit, while an extended beta-hairpin is found that lines the wall of the exit tunnel in the center of the 70S ribosome. This Halalkalibacterium halodurans (strain ATCC BAA-125 / DSM 18197 / FERM 7344 / JCM 9153 / C-125) (Bacillus halodurans) protein is Large ribosomal subunit protein uL22.